A 417-amino-acid polypeptide reads, in one-letter code: FAD-dependent monooxygenase aptC (417 aa).

The first 18 residues, 1 to 18, serve as a signal peptide directing secretion; that stretch reads MTLPVLIIGAGLSGLTTA. 5 residues coordinate FAD: glutamate 32, alanine 43, arginine 117, aspartate 332, and glycine 345.

This sequence belongs to the paxM FAD-dependent monooxygenase family. FAD is required as a cofactor.

It catalyses the reaction 3,6,8,9-tetrahydroxy-1-oxo-3-(2-oxopropyl)-1,2,3,4-tetrahydroanthracene-2-carboxyl-[ACP] + NADPH + O2 + H(+) = 2,3,6,8,9-pentahydroxy-1-oxo-3-(2-oxopropyl)-1,2,3,4-tetrahydroanthracene-2-carboxyl-[ACP] + NADP(+) + H2O. Its pathway is secondary metabolite biosynthesis. Functionally, FAD-dependent monooxygenase; part of the gene cluster that mediates the biosynthesis of asperthecin, an anthraquinone pigment. Polyketide synthase (PKS) aptA catalyzes the formation of the aromatic polyketide from acetyl coenzyme A and seven malonyl coenzyme A molecules. Polyketide is subsequently hydrolyzed by the action of the hydrolase aptB into endocrocin-9-anthrone. Endocrocin-9-anthrone is then oxidized into endocrocin by the monooxygenase aptC. Endocrocin is likely to decarboxylate spontaneously to form emodin which explains why there is no decarboxylase in the asperthecin biosynthesis cluster. Finally, aptC or another endogenous oxygenase catalyzes additional oxidation steps to form asperthecin. This Emericella nidulans (strain FGSC A4 / ATCC 38163 / CBS 112.46 / NRRL 194 / M139) (Aspergillus nidulans) protein is FAD-dependent monooxygenase aptC.